The chain runs to 418 residues: Histidine--tRNA ligase (418 aa).

The protein belongs to the class-II aminoacyl-tRNA synthetase family. In terms of assembly, homodimer.

It is found in the cytoplasm. It carries out the reaction tRNA(His) + L-histidine + ATP = L-histidyl-tRNA(His) + AMP + diphosphate + H(+). This chain is Histidine--tRNA ligase, found in Thermoanaerobacter sp. (strain X514).